The sequence spans 235 residues: MQPLYEGKAKRLYTTQDQDVLRIVYKDEATAFNGEKKAEFAGKGELNNRLTSHFFEVLAAAGIPTHFIEQTSEREQLVRRVTIIPLEVVVRNVVAGSLSKRLGIEEGTVLETPIVEFYYKDDSLGDPLVTPAHINLLKIATTEELSLLEQEANRVNDVLRPYFDEKGITLIDFKLEYGKTPAGEILLADEISPDTCRLWDKETGEHLDKDVFRRNIGSLIDTYQTLFNRLGGNGQ.

This sequence belongs to the SAICAR synthetase family.

The catalysed reaction is 5-amino-1-(5-phospho-D-ribosyl)imidazole-4-carboxylate + L-aspartate + ATP = (2S)-2-[5-amino-1-(5-phospho-beta-D-ribosyl)imidazole-4-carboxamido]succinate + ADP + phosphate + 2 H(+). It functions in the pathway purine metabolism; IMP biosynthesis via de novo pathway; 5-amino-1-(5-phospho-D-ribosyl)imidazole-4-carboxamide from 5-amino-1-(5-phospho-D-ribosyl)imidazole-4-carboxylate: step 1/2. In Exiguobacterium sibiricum (strain DSM 17290 / CCUG 55495 / CIP 109462 / JCM 13490 / 255-15), this protein is Phosphoribosylaminoimidazole-succinocarboxamide synthase.